Consider the following 219-residue polypeptide: Response regulator ArlR (219 aa).

The 114-residue stretch at 3–116 (NILIVEDEQN…ELLARIRAVL (114 aa)) folds into the Response regulatory domain. Asp52 bears the 4-aspartylphosphate mark. The segment at residues 122–219 (KDVLDINGII…TVRGVGYVIR (98 aa)) is a DNA-binding region (ompR/PhoB-type).

Phosphorylated by ArlS.

It localises to the cytoplasm. In terms of biological role, member of the two-component regulatory system ArlS/ArlR. The chain is Response regulator ArlR (arlR) from Staphylococcus epidermidis (strain ATCC 35984 / DSM 28319 / BCRC 17069 / CCUG 31568 / BM 3577 / RP62A).